The sequence spans 148 residues: uncharacterized protein (148 aa).

The N-terminal stretch at 1–19 (MLSNAKLLLSLAMASTALG) is a signal peptide. Asn41 and Asn59 each carry an N-linked (GlcNAc...) asparagine glycan. Asn127 is lipidated: GPI-anchor amidated asparagine. A propeptide spans 128–148 (AANARAIPGALGLAGAVMMLL) (removed in mature form).

The protein belongs to the SED1 family. The GPI-anchor is attached to the protein in the endoplasmic reticulum and serves to target the protein to the cell surface. There, the glucosamine-inositol phospholipid moiety is cleaved off and the GPI-modified mannoprotein is covalently attached via its lipidless GPI glycan remnant to the 1,6-beta-glucan of the outer cell wall layer.

Its subcellular location is the secreted. It is found in the cell wall. The protein localises to the membrane. Functionally, cell wall protein that plays a role in adaptation and resistance to cell wall stress. This is an uncharacterized protein from Saccharomyces cerevisiae (strain ATCC 204508 / S288c) (Baker's yeast).